The primary structure comprises 100 residues: Small ribosomal subunit protein uS14c (100 aa).

The protein belongs to the universal ribosomal protein uS14 family. In terms of assembly, part of the 30S ribosomal subunit.

It localises to the plastid. The protein localises to the chloroplast. Binds 16S rRNA, required for the assembly of 30S particles. This chain is Small ribosomal subunit protein uS14c, found in Chlorokybus atmophyticus (Soil alga).